The primary structure comprises 843 residues: Protein piwi (843 aa).

A Nuclear localization signal motif is present at residues 1-12 (MADDQGRGRRRP). Residues 1–76 (MADDQGRGRR…TERKPWGDQY (76 aa)) are disordered. Positions 1–257 (MADDQGRGRR…ILLGTEITHK (257 aa)) are interaction with CBX5 and papi. Symmetric dimethylarginine occurs at positions 7, 9, 10, and 11. Residues 41-72 (PRADPRIEASRERRALEEAPRREGGPTERKPW) show a composition bias toward basic and acidic residues. The PAZ domain maps to 263-372 (TIYDIMRRCS…LIPELCRVTG (110 aa)). In terms of domain architecture, Piwi spans 538-829 (LILCLVPNDN…LATLVGTNLH (292 aa)). Glutamine 589 contributes to the Mg(2+) binding site. Active-site residues include aspartate 614 and aspartate 685. Leucine 843 provides a ligand contact to Mg(2+).

It belongs to the argonaute family. Piwi subfamily. In terms of assembly, in the ovaries, part of a complex composed of at least Panx, nxf2, piwi and Nxt1. The complex is knowns as Panx-induced co-transcriptional silencing (PICTS) complex, Panx-nxf2-dependent TAP/p15 silencing (Pandas complex), SFiNX (silencing factor interacting nuclear export variant) or piwi-Panx-nxf2-p15 (PPNP) complex. Interacts with vas; this interaction is RNA-independent. Interacts with Dcr-1 and Fmr1; these interactions occur in polar granules. Interacts (via N-terminal region) with CBX5 (via chromoshadow domain). Forms a complex with Hsp83 and Hop; probably Hop mediates the interaction between piwi and Hsp83. Forms a complex with Yb body components armi and fs(1)Yb; this interaction is required for proper piRNA loading and nuclear localization of piwi. Interaction of Piwi and fs(1)Yb is likely to occur via armi. Interacts (via the N-terminal region when unmethylated or symmetrically methylated at Arg-10) with papi (via Tudor domain). Interacts with vret. Interacts with Panx. Interacts with arx. Interacts with Tudor-SN. Interacts with Nup358 (via N-terminus). Associates with the nuclear pore complex via interaction with Elys. Interacts with thoc5; the interaction might be partly RNA-mediated. Interacts with xmas-2. Symmetrically dimethylated, most likely by csul. Methylation at Arg-10 enhances binding to papi whereas methylation at Arg-7, Arg-9 or Arg-11 reduces binding affinity to papi. Post-translationally, phosphorylated on serine and tyrosine residues in an Hsp83-dependent manner. As to expression, expressed in ovaries (at protein level). Expressed somatically in ovariole terminal filament cells, epithelial sheath cells, cap cells and follicle cells (at protein level). Expressed in nurse cells and oocytes in developing egg chambers (at protein level). In embryos, accumulates in pole cells (at protein level). In larval and adult testis, expressed in a germinal proliferative center at the apical tip containing somatic hub cells and mitotically dividing germ stem cells (at protein level).

The protein resides in the cytoplasm. It localises to the nucleus. Its subcellular location is the nucleoplasm. It is found in the chromosome. Its function is as follows. Acts via the piwi-interacting RNA (piRNA) metabolic process, which mediates the repression of transposable elements during meiosis by forming complexes composed of piRNAs and Piwi proteins and governs the methylation and subsequent repression of transposons. Directly binds piRNAs, a class of 24 to 30 nucleotide RNAs that are generated by a Dicer-independent mechanism and are primarily derived from transposons and other repeated sequence elements. In ovarian somatic cells, mediates silencing of transposable elements at the transcriptional level in a mael-dependent manner. Involved in silencing of long terminal repeat (LTR) retrotransposons in male germline. In testis, regulates spermatogenesis together with Tudor-SN. In germ cells, mediates silencing at both transcriptional and post-transcriptional levels and is involved in the maintenance of populations of primary and secondary piRNAs. Piwi-mediated transcriptional silencing is accompanied by the formation of His3 trimethylated on 'Lys-10' (H3K9me3) associated euchromatin and heterochromatin. In ovary, associates predominantly with antisense piRNAs that contain uridine at their 5' end. Association with sense piRNAs is also observed but to a lesser extent. Mediates a somatic signaling mechanism required for the maintenance of germline stem cells to produce and maintain a daughter germline stem cell. It is not essential for the further differentiation of the committed daughter cell. Acts cell autonomously to promote germline stem cell division. Its role in stem cell maintenance does not seem to require nuclear localization. Required maternally for the posterior localization of osk and vas and for pole cell formation during oogenesis and early embryogenesis. Together with Hop and Hsp83, mediates canalization, also known as developmental robustness, likely via epigenetic silencing of existing genetic variants and suppression of transposon-induced new genetic variation. Shows RNA cleavage activity, although is not required for any of its known functions. In the ovaries, forms a complex with nxf2, Panx and Nxt1 which acts as effectors of cotranscriptional transposon silencing. In Drosophila melanogaster (Fruit fly), this protein is Protein piwi.